The chain runs to 247 residues: ATP synthase subunit a, chloroplastic (247 aa).

A run of 5 helical transmembrane segments spans residues 28 to 48 (GQVL…CLLG), 95 to 115 (VPFL…GALI), 134 to 154 (INTT…AGIS), 199 to 219 (LVVG…IMLL), and 220 to 240 (GLFT…AYIG).

The protein belongs to the ATPase A chain family. In terms of assembly, F-type ATPases have 2 components, CF(1) - the catalytic core - and CF(0) - the membrane proton channel. CF(1) has five subunits: alpha(3), beta(3), gamma(1), delta(1), epsilon(1). CF(0) has four main subunits: a, b, b' and c.

The protein resides in the plastid. Its subcellular location is the chloroplast thylakoid membrane. Key component of the proton channel; it plays a direct role in the translocation of protons across the membrane. The protein is ATP synthase subunit a, chloroplastic of Chlorella vulgaris (Green alga).